Consider the following 324-residue polypeptide: Melanoma-associated antigen B16 (324 aa).

The span at 1–15 shows a compositional bias: basic and acidic residues; it reads MSQDQESPRCTHDQH. 2 disordered regions span residues 1 to 22 and 39 to 108; these read MSQD…FSET and LSSS…PRNV. Positions 70–81 are enriched in low complexity; the sequence is SSSIAVTTTSSS. A compositionally biased stretch (acidic residues) spans 82-95; sequence ESDEASSNQEEEDS. The MAGE domain maps to 113-312; sequence LDQKVAFLVN…HSFPSQYAEA (200 aa).

The sequence is that of Melanoma-associated antigen B16 (MAGEB16) from Homo sapiens (Human).